The primary structure comprises 448 residues: Probable glycine dehydrogenase (decarboxylating) subunit 1 (448 aa).

It belongs to the GcvP family. N-terminal subunit subfamily. In terms of assembly, the glycine cleavage system is composed of four proteins: P, T, L and H. In this organism, the P 'protein' is a heterodimer of two subunits.

The catalysed reaction is N(6)-[(R)-lipoyl]-L-lysyl-[glycine-cleavage complex H protein] + glycine + H(+) = N(6)-[(R)-S(8)-aminomethyldihydrolipoyl]-L-lysyl-[glycine-cleavage complex H protein] + CO2. The glycine cleavage system catalyzes the degradation of glycine. The P protein binds the alpha-amino group of glycine through its pyridoxal phosphate cofactor; CO(2) is released and the remaining methylamine moiety is then transferred to the lipoamide cofactor of the H protein. The polypeptide is Probable glycine dehydrogenase (decarboxylating) subunit 1 (Anoxybacillus flavithermus (strain DSM 21510 / WK1)).